The following is a 243-amino-acid chain: UPF0246 protein SAG2081 (243 aa).

This sequence belongs to the UPF0246 family.

This is UPF0246 protein SAG2081 from Streptococcus agalactiae serotype V (strain ATCC BAA-611 / 2603 V/R).